A 67-amino-acid chain; its full sequence is ATP synthase F(0) complex subunit 8 (67 aa).

A helical transmembrane segment spans residues 8–24 (TWFTTVLASSITLFILM). Lysine 54 carries the N6-acetyllysine; alternate modification. Position 54 is an N6-succinyllysine; alternate (lysine 54). Lysine 57 bears the N6-acetyllysine mark.

The protein belongs to the ATPase protein 8 family. In terms of assembly, component of the ATP synthase complex composed at least of ATP5F1A/subunit alpha, ATP5F1B/subunit beta, ATP5MC1/subunit c (homooctomer), MT-ATP6/subunit a, MT-ATP8/subunit 8, ATP5ME/subunit e, ATP5MF/subunit f, ATP5MG/subunit g, ATP5MK/subunit k, ATP5MJ/subunit j, ATP5F1C/subunit gamma, ATP5F1D/subunit delta, ATP5F1E/subunit epsilon, ATP5PF/subunit F6, ATP5PB/subunit b, ATP5PD/subunit d, ATP5PO/subunit OSCP. ATP synthase complex consists of a soluble F(1) head domain (subunits alpha(3) and beta(3)) - the catalytic core - and a membrane F(0) domain - the membrane proton channel (subunits c, a, 8, e, f, g, k and j). These two domains are linked by a central stalk (subunits gamma, delta, and epsilon) rotating inside the F1 region and a stationary peripheral stalk (subunits F6, b, d, and OSCP). Interacts with PRICKLE3.

The protein localises to the mitochondrion membrane. In terms of biological role, subunit 8, of the mitochondrial membrane ATP synthase complex (F(1)F(0) ATP synthase or Complex V) that produces ATP from ADP in the presence of a proton gradient across the membrane which is generated by electron transport complexes of the respiratory chain. ATP synthase complex consist of a soluble F(1) head domain - the catalytic core - and a membrane F(1) domain - the membrane proton channel. These two domains are linked by a central stalk rotating inside the F(1) region and a stationary peripheral stalk. During catalysis, ATP synthesis in the catalytic domain of F(1) is coupled via a rotary mechanism of the central stalk subunits to proton translocation. In vivo, can only synthesize ATP although its ATP hydrolase activity can be activated artificially in vitro. Part of the complex F(0) domain. This Cricetulus griseus (Chinese hamster) protein is ATP synthase F(0) complex subunit 8.